Consider the following 261-residue polypeptide: ATP synthase subunit a (261 aa).

Helical transmembrane passes span 30 to 50 (VLFT…GLFM), 63 to 83 (WQVA…ANIG), 96 to 116 (LFMF…VLGL), 125 to 145 (IAIT…VGFW), 151 to 171 (FFSL…IAPI), 187 to 207 (LFVA…FVIN), 214 to 234 (LWLG…ISAL), and 235 to 255 (ELLV…LYIN).

It belongs to the ATPase A chain family. F-type ATPases have 2 components, CF(1) - the catalytic core - and CF(0) - the membrane proton channel. CF(1) has five subunits: alpha(3), beta(3), gamma(1), delta(1), epsilon(1). CF(0) has three main subunits: a(1), b(2) and c(9-12). The alpha and beta chains form an alternating ring which encloses part of the gamma chain. CF(1) is attached to CF(0) by a central stalk formed by the gamma and epsilon chains, while a peripheral stalk is formed by the delta and b chains.

The protein localises to the cell inner membrane. Key component of the proton channel; it plays a direct role in the translocation of protons across the membrane. The protein is ATP synthase subunit a of Sphingopyxis alaskensis (strain DSM 13593 / LMG 18877 / RB2256) (Sphingomonas alaskensis).